Reading from the N-terminus, the 472-residue chain is Siroheme synthase 1 (472 aa).

The tract at residues 1-203 (MDYLPLFADL…GQLTEAENEL (203 aa)) is precorrin-2 dehydrogenase /sirohydrochlorin ferrochelatase. NAD(+) is bound by residues 22–23 (EV) and 43–44 (QT). Ser-128 is modified (phosphoserine). The interval 215 to 472 (GEVALVGAGP…AISPSVVNLA (258 aa)) is uroporphyrinogen-III C-methyltransferase. Pro-224 serves as a coordination point for S-adenosyl-L-methionine. Asp-247 acts as the Proton acceptor in catalysis. Residue Lys-269 is the Proton donor of the active site. S-adenosyl-L-methionine contacts are provided by residues 300–302 (GGD), Ile-305, 330–331 (TA), Met-382, and Gly-411.

In the N-terminal section; belongs to the precorrin-2 dehydrogenase / sirohydrochlorin ferrochelatase family. This sequence in the C-terminal section; belongs to the precorrin methyltransferase family.

The catalysed reaction is uroporphyrinogen III + 2 S-adenosyl-L-methionine = precorrin-2 + 2 S-adenosyl-L-homocysteine + H(+). It carries out the reaction precorrin-2 + NAD(+) = sirohydrochlorin + NADH + 2 H(+). The enzyme catalyses siroheme + 2 H(+) = sirohydrochlorin + Fe(2+). The protein operates within cofactor biosynthesis; adenosylcobalamin biosynthesis; precorrin-2 from uroporphyrinogen III: step 1/1. Its pathway is cofactor biosynthesis; adenosylcobalamin biosynthesis; sirohydrochlorin from precorrin-2: step 1/1. It participates in porphyrin-containing compound metabolism; siroheme biosynthesis; precorrin-2 from uroporphyrinogen III: step 1/1. It functions in the pathway porphyrin-containing compound metabolism; siroheme biosynthesis; siroheme from sirohydrochlorin: step 1/1. The protein operates within porphyrin-containing compound metabolism; siroheme biosynthesis; sirohydrochlorin from precorrin-2: step 1/1. Functionally, multifunctional enzyme that catalyzes the SAM-dependent methylations of uroporphyrinogen III at position C-2 and C-7 to form precorrin-2 via precorrin-1. Then it catalyzes the NAD-dependent ring dehydrogenation of precorrin-2 to yield sirohydrochlorin. Finally, it catalyzes the ferrochelation of sirohydrochlorin to yield siroheme. The protein is Siroheme synthase 1 of Yersinia pseudotuberculosis serotype I (strain IP32953).